The sequence spans 405 residues: Prenyltransferase phqA (405 aa).

Dimethylallyl diphosphate-binding residues include Tyr195, Lys262, and Gln332.

The protein belongs to the tryptophan dimethylallyltransferase family.

The protein operates within alkaloid biosynthesis. Prenyltransferase; part of the gene cluster that mediates the biosynthesis of paraherquamide, a fungal indole alkaloid that belongs to a family of natural products containing a characteristic bicyclo[2.2.2]diazaoctane core. The first steps in the biosynthesis of paraherquamide is the production of the beta-methyl-proline precursor from L-isoleucine. They require oxidation of a terminally hydroxylated L-isoleucine to the corresponding aldehyde by enzymes which have still to be identified. Spontaneous cyclization and dehydration would yield the 4-methyl pyrolline-5-carboxylic acid, which is then reduced by the pyrroline-5-carboxylate reductase phqD leading to the beta-methyl-proline precursor. The next step of paraherquamide biosynthesis involves coupling of beta-methyl-proline and L-tryptophan by the bimodular NRPS phqB, to produce a monooxopiperazine intermediate. The reductase (R) domain of phqB utilizes NADPH for hydride transfer to reduce the thioester bond of the T domain-tethered linear dipeptide to a hemithioaminal intermediate, which spontaneously cleaves the C-S bond to release the aldehyde product. This compound undergoes spontaneous cyclization and dehydration to give a dienamine which is reverse prenylated at C-2 by the reverse prenyltransferase phqJ. The other prenyltransferase present in the cluster, phqI may be a redundant gene in the pathway. During biosynthetic assembly, the key step to produce the polycyclic core is catalyzed by the bifunctional reductase and intramolecular [4+2] Diels-Alderase, phqE, resulting in formation of the [2.2.2] diazaoctane intermediate preparaherquamide. Following formation of preparaherquamide, an indole 2,3-epoxidation-initiated pinacol-like rearrangement is catalyzed by the phqK FAD-dependent monooxygenase. The prenyltransferase phqA, the cytochrome P450 monooxygenase phqL, and the FAD-linked oxidoreductase phqH (or the cytochrome P450 monooxygenase phqM), are proposed to be involved in the formation of the pyran ring. The FAD-dependent monooxygenase phqK is likely responsible for generation of the spiro-oxindole, and the N-methylation is likely mediated by the phqN methyltransferase leading to the isolable natural product paraherquamide F. However, the order of these biosynthetic steps has still to be determined. In late-stage paraherquamide biosynthesis, the third P450 monooxygenase, phqO, is probably responsible for the C-14 hydroxylation, transforming paraherquamide F to paraherquamide G, and paraherquamide E to the final product paraherquamide A. The expansion from the 6-membered ring pyran (in paraherquamides F and G) to the 7-membered dioxepin ring (in paraherquamides A and E) represents a poorly understood but intriguing process that probably involves the 2-oxoglutarate-dependent dioxygenase phqC. Finally, the remaining members of the paraherquamide cluster, including phqI as well as phqM (or phqH), do not have a clearly prescribed role and appear to be redundant. The chain is Prenyltransferase phqA from Penicillium fellutanum.